A 1378-amino-acid polypeptide reads, in one-letter code: DNA-directed RNA polymerase subunit beta (1378 aa).

Belongs to the RNA polymerase beta chain family. As to quaternary structure, the RNAP catalytic core consists of 2 alpha, 1 beta, 1 beta' and 1 omega subunit. When a sigma factor is associated with the core the holoenzyme is formed, which can initiate transcription.

The enzyme catalyses RNA(n) + a ribonucleoside 5'-triphosphate = RNA(n+1) + diphosphate. DNA-dependent RNA polymerase catalyzes the transcription of DNA into RNA using the four ribonucleoside triphosphates as substrates. The sequence is that of DNA-directed RNA polymerase subunit beta from Ruegeria pomeroyi (strain ATCC 700808 / DSM 15171 / DSS-3) (Silicibacter pomeroyi).